Reading from the N-terminus, the 100-residue chain is Small ribosomal subunit protein uS14 (100 aa).

Belongs to the universal ribosomal protein uS14 family. Part of the 30S ribosomal subunit. Contacts proteins S3 and S10.

In terms of biological role, binds 16S rRNA, required for the assembly of 30S particles and may also be responsible for determining the conformation of the 16S rRNA at the A site. The sequence is that of Small ribosomal subunit protein uS14 from Nostoc sp. (strain PCC 7120 / SAG 25.82 / UTEX 2576).